The following is a 177-amino-acid chain: Coatomer subunit zeta-1 (177 aa).

M1 is subject to N-acetylmethionine.

It belongs to the adaptor complexes small subunit family. Oligomeric complex that consists of at least the alpha, beta, beta', gamma, delta, epsilon and zeta subunits.

Its subcellular location is the cytoplasm. The protein localises to the golgi apparatus membrane. It localises to the cytoplasmic vesicle. The protein resides in the COPI-coated vesicle membrane. In terms of biological role, the coatomer is a cytosolic protein complex that binds to dilysine motifs and reversibly associates with Golgi non-clathrin-coated vesicles, which further mediate biosynthetic protein transport from the ER, via the Golgi up to the trans Golgi network. Coatomer complex is required for budding from Golgi membranes, and is essential for the retrograde Golgi-to-ER transport of dilysine-tagged proteins. The zeta subunit may be involved in regulating the coat assembly and, hence, the rate of biosynthetic protein transport due to its association-dissociation properties with the coatomer complex. The polypeptide is Coatomer subunit zeta-1 (COPZ1) (Homo sapiens (Human)).